We begin with the raw amino-acid sequence, 337 residues long: Equatorin (337 aa).

The signal sequence occupies residues 1–20 (MDFILLIILSGVFLPDIISL). Residues 21–183 (QPIVGQEPGV…LSELEEIKLK (163 aa)) are Lumenal-facing. The segment at 110 to 130 (SKPTASGEEEKPSESSRKTST) is disordered. Basic and acidic residues predominate over residues 117-126 (EEEKPSESSR). N-linked (GlcNAc...) asparagine glycosylation occurs at Asn145. Residues 184-204 (LMLGISLMTLVLLIPLLIFCF) form a helical membrane-spanning segment. Topologically, residues 205 to 337 (ATLYKLRHLR…LLNKEGSPSN (133 aa)) are cytoplasmic. A disordered region spans residues 259–283 (SSEMRRSRTRRSKSKPMDFSAGSNQ). At Ser336 the chain carries Phosphoserine.

As to quaternary structure, interacts with SNAP25. Highly N- and O-glycosylated; contains sialic acid. MN9 epitope is O-glycosylated. As to expression, sperm specific, including germ cells (at protein level).

The protein resides in the cytoplasmic vesicle. Its subcellular location is the secretory vesicle. The protein localises to the acrosome membrane. It localises to the acrosome inner membrane. It is found in the acrosome outer membrane. The protein resides in the nucleus. Its subcellular location is the cytoplasm. Functionally, acrosomal membrane-anchored protein involved in the process of fertilization and in acrosome biogenesis. The protein is Equatorin (Eqtn) of Mus musculus (Mouse).